The sequence spans 293 residues: Protease HtpX (293 aa).

A run of 2 helical transmembrane segments spans residues 2-22 (FRIL…SVTL) and 38-58 (LTSL…ISLF). Residue His145 coordinates Zn(2+). Glu146 is an active-site residue. Residue His149 participates in Zn(2+) binding. A run of 2 helical transmembrane segments spans residues 156–176 (VTLA…ARII) and 193–213 (IGFF…ASII). Glu222 contacts Zn(2+).

Belongs to the peptidase M48B family. Zn(2+) serves as cofactor.

Its subcellular location is the cell inner membrane. The chain is Protease HtpX from Hahella chejuensis (strain KCTC 2396).